The sequence spans 144 residues: Putative pre-16S rRNA nuclease (144 aa).

The protein belongs to the YqgF nuclease family.

The protein localises to the cytoplasm. Functionally, could be a nuclease involved in processing of the 5'-end of pre-16S rRNA. This chain is Putative pre-16S rRNA nuclease, found in Lacticaseibacillus casei (strain BL23) (Lactobacillus casei).